Here is a 401-residue protein sequence, read N- to C-terminus: Argininosuccinate synthase (401 aa).

Ala9 to Ser17 contacts ATP. Tyr86 lines the L-citrulline pocket. Gly116 is a binding site for ATP. Positions 118, 122, and 123 each coordinate L-aspartate. Position 122 (Asn122) interacts with L-citrulline. Positions 126, 174, 183, 259, and 271 each coordinate L-citrulline.

It belongs to the argininosuccinate synthase family. Type 1 subfamily. Homotetramer.

It is found in the cytoplasm. It carries out the reaction L-citrulline + L-aspartate + ATP = 2-(N(omega)-L-arginino)succinate + AMP + diphosphate + H(+). It participates in amino-acid biosynthesis; L-arginine biosynthesis; L-arginine from L-ornithine and carbamoyl phosphate: step 2/3. The protein is Argininosuccinate synthase of Bacillus cereus (strain Q1).